Reading from the N-terminus, the 1230-residue chain is Cullin-associated NEDD8-dissociated protein 1 (1230 aa).

Ala2 carries the post-translational modification N-acetylalanine. HEAT repeat units lie at residues 2–39 (ASAS…KDSI), 44–81 (DSER…KVKE), 83–119 (QVET…ELPP), 131–165 (CKKI…LSRQ), 171–208 (NFHP…SCGN), 210–247 (VFVD…QAGH), 248–282 (RIGE…FESF), 289–366 (EVYP…TRHE), 370–407 (EFYK…QTRP), 424–467 (PLTM…VLPG), 471–510 (QHIP…NHSP), and 515–552 (PHVQ…VIRP). An N6-acetyllysine modification is found at Lys55. The segment at 315–344 (DEDEDENAMDADGGDDDDQGSDDEYSDDDD) is disordered. Ser335 carries the post-translational modification Phosphoserine. At Ser558 the chain carries Phosphoserine. HEAT repeat units follow at residues 563-602 (PYIK…NLGD), 606-643 (PDLS…LKID), 646-683 (PVLG…NYSD), 688-725 (AMID…VYPS), 729-768 (KISG…TGTN), 770-808 (LGYM…ALTR), 809-845 (ACPK…LGEV), 852-889 (SGQL…GNLP), 890-927 (EYLP…GLKP), 928-960 (YVEN…KLTL), 961-998 (IDPE…DHPQ), 1002-1039 (PLLK…NKPS), 1043-1097 (DLLD…DSCL), 1099-1133 (RLDI…LSTL), and 1140-1189 (QRLD…IPEA). Lys971 is subject to N6-acetyllysine.

It belongs to the CAND family. Interacts with TBP. Part of a complex that contains CUL1 and RBX1. Interacts with unneddylated cullins: interacts with CUL1, CUL2, CUL3, CUL4A, CUL4B and CUL5. Does not bind neddylated CUL1. Interaction with cullins is abolished in presence of COMMD1, which antagonizes with CAND1 for interacting with cullins. Interacts with ERCC6. Interacts with DCUN1D1, DCUN1D2, DCUN1D3, DCUN1D4 and DCUN1D5; these interactions are bridged by cullins and strongly inhibits the neddylation of cullins. Detected in heart, brain, spleen, liver, skeletal muscle, kidney and testis.

It localises to the cytoplasm. The protein resides in the nucleus. Its function is as follows. Key assembly factor of SCF (SKP1-CUL1-F-box protein) E3 ubiquitin ligase complexes that promotes the exchange of the substrate-recognition F-box subunit in SCF complexes, thereby playing a key role in the cellular repertoire of SCF complexes. Acts as a F-box protein exchange factor. The exchange activity of CAND1 is coupled with cycles of neddylation conjugation: in the deneddylated state, cullin-binding CAND1 binds CUL1-RBX1, increasing dissociation of the SCF complex and promoting exchange of the F-box protein. Probably plays a similar role in other cullin-RING E3 ubiquitin ligase complexes. May indirectly enhance transcription from various types of promoters. This chain is Cullin-associated NEDD8-dissociated protein 1 (Cand1), found in Rattus norvegicus (Rat).